The chain runs to 553 residues: Solute carrier family 2, facilitated glucose transporter member 10 (553 aa).

Residues 1-15 are Cytoplasmic-facing; that stretch reads MGLRSTTLVLAATSS. A helical membrane pass occupies residues 16–36; the sequence is LLGGLIFGYELGIISGALLML. The Extracellular portion of the chain corresponds to 37–48; sequence KTVFQLTCFEQE. The helical transmembrane segment at 49–69 threads the bilayer; it reads ALVSAVLFGALLASLIGGFII. The Cytoplasmic segment spans residues 70 to 82; sequence DRSGRRTSIMGSN. A helical transmembrane segment spans residues 83 to 103; it reads LVVLAGSIILIATSSFWWLVV. Residues 104–105 lie on the Extracellular side of the membrane; the sequence is GR. A helical transmembrane segment spans residues 106–126; it reads VTVGFAISISSMACCIYVSEI. The Cytoplasmic segment spans residues 127–132; the sequence is VRPHQR. A helical membrane pass occupies residues 133 to 153; that stretch reads GTLVSLYETGITVGILISYAM. The Extracellular segment spans residues 154–165; sequence NYFLSAVNDGWK. The chain crosses the membrane as a helical span at residues 166-186; it reads YMFGLAIIPAAFQFIVILFLP. The Cytoplasmic segment spans residues 187–240; that stretch reads SKPHTLNFWEQDSDNGFIELEEAGESGEFKPDTYDKQYTFLDLFRSKDNMRTRT. The chain crosses the membrane as a helical span at residues 241–261; sequence LLGLGLVLFQQFTGQPNVLYY. Position 250–251 (250–251) interacts with D-glucose; that stretch reads QQ. The Extracellular segment spans residues 262–277; sequence ASTIFRSVGFQSNSSA. The N-linked (GlcNAc...) asparagine glycan is linked to asparagine 274. Residues 278–298 traverse the membrane as a helical segment; it reads VLASVGLGVVKVASTLIAICF. Residues 299–305 are Cytoplasmic-facing; the sequence is ADKAGRR. Residues 306–326 traverse the membrane as a helical segment; that stretch reads ILLLAGCIVMTIAISGIGIVS. Topologically, residues 327–413 are extracellular; that stretch reads FMVELDSHRD…PPAGPDSNYA (87 aa). Asparagine 344, asparagine 351, and asparagine 400 each carry an N-linked (GlcNAc...) asparagine glycan. The chain crosses the membrane as a helical span at residues 414 to 434; that stretch reads ILNWITLLSMMAFVSAFSIGF. At 435–462 the chain is on the cytoplasmic side; that stretch reads GPMTWLVLSEIYPADIRGRAFAFCNSFN. Residue tryptophan 439 participates in D-glucose binding. Residues 463–482 form a helical membrane-spanning segment; sequence WAANLLITLTFLEVIGSIGL. A topological domain (extracellular) is located at residue glycine 483. A helical membrane pass occupies residues 484 to 504; sequence WTFLLYGGVGLLAIAFIYFFI. The Cytoplasmic segment spans residues 505-553; sequence PETKGQSLEEIDQQLSSKRISKRRETSKGVRKRPSTGPPYQRVGKSNWT. The disordered stretch occupies residues 522–553; it reads KRISKRRETSKGVRKRPSTGPPYQRVGKSNWT.

This sequence belongs to the major facilitator superfamily. Sugar transporter (TC 2.A.1.1) family. Glucose transporter subfamily.

It localises to the endomembrane system. The protein localises to the cytoplasm. Its subcellular location is the perinuclear region. The enzyme catalyses D-glucose(out) = D-glucose(in). In terms of biological role, facilitative glucose transporter required for the development of the cardiovascular system. In Xenopus laevis (African clawed frog), this protein is Solute carrier family 2, facilitated glucose transporter member 10.